Reading from the N-terminus, the 1090-residue chain is Protein transport protein Sec24A (1090 aa).

Disordered regions lie at residues methionine 1–threonine 260 and threonine 272–proline 325. The segment covering alanine 8 to serine 28 has biased composition (low complexity). 3 stretches are compositionally biased toward polar residues: residues proline 29–proline 55, tryptophan 138–histidine 151, and glycine 162–phenylalanine 184. Pro residues predominate over residues glutamine 194–serine 236. Polar residues-rich tracts occupy residues phenylalanine 237 to histidine 258, glutamine 274 to valine 286, and serine 313 to proline 325. Positions 428, 431, 449, and 452 each coordinate Zn(2+). Residues cysteine 428 to cysteine 452 form a zinc finger-like region. The stretch at proline 963 to isoleucine 1036 is one Gelsolin-like repeat.

Belongs to the SEC23/SEC24 family. SEC24 subfamily. As to quaternary structure, COPII is composed of at least five proteins: the Sec23/24 complex, the Sec13/31 complex and Sar1. Interacts with TMED2. Interacts (as part of the Sec23/24 complex) with SEC22B; recruits SEC22B into COPII-coated vesicles for its transport from the endoplasmic reticulum to the Golgi. Interacts with STING1; promoting STING1 translocation to COPII vesicles in a STEEP1-dependent manner. Interacts with TMEM39A. Interacts with SACM1L; this interaction is reduced in the absence of TMEM39A. Interacts with kinase FAM20C; transport of FAM20C from the endoplasmic reticulum to the Golgi is likely to be mediated by COPII vesicles.

The protein localises to the cytoplasmic vesicle. It localises to the COPII-coated vesicle membrane. It is found in the endoplasmic reticulum membrane. The protein resides in the cytoplasm. Its subcellular location is the cytosol. In terms of biological role, component of the coat protein complex II (COPII) which promotes the formation of transport vesicles from the endoplasmic reticulum (ER). The coat has two main functions, the physical deformation of the endoplasmic reticulum membrane into vesicles and the selection of cargo molecules for their transport to the Golgi complex. Plays a central role in cargo selection within the COPII complex and together with SEC24B may have a different specificity compared to SEC24C and SEC24D. May package preferentially cargos with cytoplasmic DxE or LxxLE motifs and may also recognize conformational epitopes. The polypeptide is Protein transport protein Sec24A (Mus musculus (Mouse)).